The sequence spans 61 residues: MRLLYLLFAAVMLLFLQAVPANGSYYSTLQCRNNHGHCRRLCFHGEQWIGNCNGRHQHCCK.

Residues 1–21 (MRLLYLLFAAVMLLFLQAVPA) form the signal peptide. Residues Ser24, Arg40, His44, Asn51, Asn53, Gly54, His58, and Lys61 each contribute to the a 1,2-diacyl-sn-glycero-3-phosphate site. 3 disulfides stabilise this stretch: Cys31–Cys59, Cys38–Cys52, and Cys42–Cys60.

It belongs to the beta-defensin family. In terms of assembly, monomeric. Forms multimeric, probably including tetrameric, complexes in the presence of phospholipid phosphatidic acid.

The protein localises to the secreted. Its function is as follows. Exhibits antimicrobial activity against fungi. Antimicrobial activity in a pH-dependent manner against the yeast C.albicans; activity is salt tolerant and retains antifungal activity in NaCl concentrations of 100mM. Permeabilizes C.albicans cell membranes via targeting plasma membrane phospholipid phosphatidic acid. The protein is Beta-defensin 13 of Crocodylus porosus (Saltwater crocodile).